The chain runs to 306 residues: Methionyl-tRNA formyltransferase (306 aa).

109–112 serves as a coordination point for (6S)-5,6,7,8-tetrahydrofolate; it reads SILP.

It belongs to the Fmt family.

It catalyses the reaction L-methionyl-tRNA(fMet) + (6R)-10-formyltetrahydrofolate = N-formyl-L-methionyl-tRNA(fMet) + (6S)-5,6,7,8-tetrahydrofolate + H(+). In terms of biological role, attaches a formyl group to the free amino group of methionyl-tRNA(fMet). The formyl group appears to play a dual role in the initiator identity of N-formylmethionyl-tRNA by promoting its recognition by IF2 and preventing the misappropriation of this tRNA by the elongation apparatus. The sequence is that of Methionyl-tRNA formyltransferase from Herpetosiphon aurantiacus (strain ATCC 23779 / DSM 785 / 114-95).